A 218-amino-acid chain; its full sequence is Thiopurine S-methyltransferase (218 aa).

S-adenosyl-L-methionine contacts are provided by tryptophan 10, leucine 45, glutamate 66, and arginine 123.

It belongs to the class I-like SAM-binding methyltransferase superfamily. TPMT family.

The protein resides in the cytoplasm. The enzyme catalyses S-adenosyl-L-methionine + a thiopurine = S-adenosyl-L-homocysteine + a thiopurine S-methylether.. The protein is Thiopurine S-methyltransferase of Shewanella baltica (strain OS195).